A 631-amino-acid polypeptide reads, in one-letter code: Biotin--protein ligase (631 aa).

One can recognise a BPL/LPL catalytic domain in the interval 341-553; that stretch reads ELYAKLINGC…QFDRYHRLLL (213 aa).

It belongs to the biotin--protein ligase family. As to quaternary structure, monomer.

The protein localises to the cytoplasm. It carries out the reaction apo-[methylmalonyl-CoA:pyruvate carboxytransferase] + biotin + ATP = holo-[methylmalonyl-CoA:pyruvate carboxytransferase] + AMP + diphosphate + H(+). The catalysed reaction is apo-[propionyl-CoA:carbon-dioxide ligase (ADP-forming)] + biotin + ATP = holo-[propionyl-CoA:carbon-dioxide ligase (ADP-forming)] + AMP + diphosphate + H(+). The enzyme catalyses apo-[3-methylcrotonoyl-CoA:carbon-dioxide ligase (ADP-forming)] + biotin + ATP = holo-[3-methylcrotonoyl-CoA:carbon-dioxide ligase (ADP-forming)] + AMP + diphosphate + H(+). It catalyses the reaction biotin + L-lysyl-[protein] + ATP = N(6)-biotinyl-L-lysyl-[protein] + AMP + diphosphate + H(+). Its function is as follows. Post-translational modification of specific protein by attachment of biotin. Acts on various carboxylases such as acetyl-CoA-carboxylase, pyruvate carboxylase, propionyl CoA carboxylase, and 3-methylcrotonyl CoA carboxylase. This chain is Biotin--protein ligase (bpl1), found in Schizosaccharomyces pombe (strain 972 / ATCC 24843) (Fission yeast).